Here is a 427-residue protein sequence, read N- to C-terminus: Enolase (427 aa).

Gln-163 is a binding site for (2R)-2-phosphoglycerate. The Proton donor role is filled by Glu-205. Residues Asp-242, Glu-288, and Asp-315 each contribute to the Mg(2+) site. Lys-340, Arg-369, Ser-370, and Lys-391 together coordinate (2R)-2-phosphoglycerate. The active-site Proton acceptor is Lys-340.

The protein belongs to the enolase family. Mg(2+) is required as a cofactor.

The protein localises to the cytoplasm. The protein resides in the secreted. It is found in the cell surface. The enzyme catalyses (2R)-2-phosphoglycerate = phosphoenolpyruvate + H2O. Its pathway is carbohydrate degradation; glycolysis; pyruvate from D-glyceraldehyde 3-phosphate: step 4/5. Functionally, catalyzes the reversible conversion of 2-phosphoglycerate (2-PG) into phosphoenolpyruvate (PEP). It is essential for the degradation of carbohydrates via glycolysis. The protein is Enolase of Cytophaga hutchinsonii (strain ATCC 33406 / DSM 1761 / CIP 103989 / NBRC 15051 / NCIMB 9469 / D465).